The chain runs to 749 residues: Meiotically up-regulated gene 122 protein (749 aa).

The Cytoplasmic portion of the chain corresponds to 1-20; that stretch reads MYRKWDLCITRHLLPYIEHS. A helical; Signal-anchor for type II membrane protein transmembrane segment spans residues 21–41; the sequence is VIPIIALLVLSLIFYILYICF. Topologically, residues 42-749 are lumenal; it reads GTTSYILSGI…LLSNALRSII (708 aa). Positions 88–261 constitute a PXA domain; the sequence is PPELEAPLQL…CIILYFSSSE (174 aa). One can recognise a PX domain in the interval 311 to 422; the sequence is LHYQFLKEAS…KFFAKSMRSH (112 aa). Disordered regions lie at residues 439–489 and 504–546; these read QSSS…LSQQ and GSCT…PPKP. Composition is skewed to polar residues over residues 440-461 and 475-489; these read SSSV…NKTS and LSHQ…LSQQ.

This sequence belongs to the sorting nexin family.

The protein resides in the endoplasmic reticulum membrane. Has a role in meiosis. The chain is Meiotically up-regulated gene 122 protein (mug122) from Schizosaccharomyces pombe (strain 972 / ATCC 24843) (Fission yeast).